We begin with the raw amino-acid sequence, 348 residues long: Ion-translocating oxidoreductase complex subunit D (348 aa).

5 helical membrane-spanning segments follow: residues 19–39 (FMLW…AFFG), 41–61 (GVVI…IVVA), 66–86 (KSTT…ILAM), 87–107 (AIPP…ALLL), and 122–142 (PAMV…TSWL). The residue at position 186 (Thr-186) is an FMN phosphoryl threonine. 5 consecutive transmembrane segments (helical) span residues 212–232 (IFAR…LFLL), 236–256 (IIHW…SALT), 265–285 (LNVL…FIAT), 291–311 (SITP…AYLI), and 315–335 (GSYP…VPLI).

Belongs to the NqrB/RnfD family. As to quaternary structure, the complex is composed of six subunits: RnfA, RnfB, RnfC, RnfD, RnfE and RnfG. The cofactor is FMN.

Its subcellular location is the cell inner membrane. Functionally, part of a membrane-bound complex that couples electron transfer with translocation of ions across the membrane. This Haemophilus ducreyi (strain 35000HP / ATCC 700724) protein is Ion-translocating oxidoreductase complex subunit D.